A 428-amino-acid chain; its full sequence is AP2-like ethylene-responsive transcription factor At2g41710 (428 aa).

The span at 1–10 (MASVSSSDQG) shows a compositional bias: polar residues. A disordered region spans residues 1–28 (MASVSSSDQGPKTEAGCSGGGGGESSET). Positions 70 to 136 (IYRGVTRHRW…WGPGTLINFP (67 aa)) form a DNA-binding region, AP2/ERF.

It belongs to the AP2/ERF transcription factor family. AP2 subfamily.

The protein resides in the nucleus. In terms of biological role, probably acts as a transcriptional activator. Binds to the GCC-box pathogenesis-related promoter element. May be involved in the regulation of gene expression by stress factors and by components of stress signal transduction pathways. The polypeptide is AP2-like ethylene-responsive transcription factor At2g41710 (Arabidopsis thaliana (Mouse-ear cress)).